The primary structure comprises 299 residues: Pyridoxal 5'-phosphate synthase subunit PdxS (299 aa).

Asp-24 serves as a coordination point for D-ribose 5-phosphate. Lys-81 serves as the catalytic Schiff-base intermediate with D-ribose 5-phosphate. A D-ribose 5-phosphate-binding site is contributed by Gly-153. Arg-165 provides a ligand contact to D-glyceraldehyde 3-phosphate. D-ribose 5-phosphate contacts are provided by residues Gly-219 and 240–241; that span reads GS.

Belongs to the PdxS/SNZ family. In the presence of PdxT, forms a dodecamer of heterodimers.

It catalyses the reaction aldehydo-D-ribose 5-phosphate + D-glyceraldehyde 3-phosphate + L-glutamine = pyridoxal 5'-phosphate + L-glutamate + phosphate + 3 H2O + H(+). It participates in cofactor biosynthesis; pyridoxal 5'-phosphate biosynthesis. In terms of biological role, catalyzes the formation of pyridoxal 5'-phosphate from ribose 5-phosphate (RBP), glyceraldehyde 3-phosphate (G3P) and ammonia. The ammonia is provided by the PdxT subunit. Can also use ribulose 5-phosphate and dihydroxyacetone phosphate as substrates, resulting from enzyme-catalyzed isomerization of RBP and G3P, respectively. In Methanococcus aeolicus (strain ATCC BAA-1280 / DSM 17508 / OCM 812 / Nankai-3), this protein is Pyridoxal 5'-phosphate synthase subunit PdxS.